A 333-amino-acid polypeptide reads, in one-letter code: tRNA N6-adenosine threonylcarbamoyltransferase (333 aa).

Positions 111 and 115 each coordinate Fe cation. Substrate contacts are provided by residues 134 to 138 (LVSGG), Asp167, Gly180, and Asn272. Residue Asp300 coordinates Fe cation.

The protein belongs to the KAE1 / TsaD family. Fe(2+) is required as a cofactor.

The protein resides in the cytoplasm. It catalyses the reaction L-threonylcarbamoyladenylate + adenosine(37) in tRNA = N(6)-L-threonylcarbamoyladenosine(37) in tRNA + AMP + H(+). In terms of biological role, required for the formation of a threonylcarbamoyl group on adenosine at position 37 (t(6)A37) in tRNAs that read codons beginning with adenine. Is involved in the transfer of the threonylcarbamoyl moiety of threonylcarbamoyl-AMP (TC-AMP) to the N6 group of A37, together with TsaE and TsaB. TsaD likely plays a direct catalytic role in this reaction. This is tRNA N6-adenosine threonylcarbamoyltransferase from Legionella pneumophila subsp. pneumophila (strain Philadelphia 1 / ATCC 33152 / DSM 7513).